Reading from the N-terminus, the 148-residue chain is uncharacterized protein (148 aa).

Transmembrane regions (helical) follow at residues 20–42 (YYSK…IANY), 52–74 (YFLM…VRCY), and 118–135 (IIRY…CTYI).

The protein localises to the cell membrane. This is an uncharacterized protein from Rickettsia prowazekii (strain Madrid E).